The chain runs to 398 residues: Glucose-1-phosphate adenylyltransferase (398 aa).

Alpha-D-glucose 1-phosphate contacts are provided by residues tyrosine 100, glycine 165, 180 to 181 (EK), and serine 191.

The protein belongs to the bacterial/plant glucose-1-phosphate adenylyltransferase family. Homotetramer.

It catalyses the reaction alpha-D-glucose 1-phosphate + ATP + H(+) = ADP-alpha-D-glucose + diphosphate. It participates in glycan biosynthesis; glycogen biosynthesis. Its function is as follows. Involved in the biosynthesis of ADP-glucose, a building block required for the elongation reactions to produce glycogen. Catalyzes the reaction between ATP and alpha-D-glucose 1-phosphate (G1P) to produce pyrophosphate and ADP-Glc. This chain is Glucose-1-phosphate adenylyltransferase, found in Desulfitobacterium hafniense (strain DSM 10664 / DCB-2).